Reading from the N-terminus, the 325-residue chain is mRNA decay activator protein ZFP36 (325 aa).

The tract at residues 1–15 (MDLAAIYKSLLSLSP) is necessary for nuclear export. The necessary and sufficient for the association with mRNA decay enzymes and mRNA decay activation stretch occupies residues 1–98 (MDLAAIYKSL…PTSPTATPTT (98 aa)). 2 necessary for localization of ARE-containing mRNAs to processing bodies (PBs) regions span residues 1–172 (MDLA…DLAA) and 98–325 (TSSR…SVSE). Over residues 15-48 (PELPSDLGETESSTSWASSGPWSLSSSDSSLPEA) the composition is skewed to low complexity. Positions 15–101 (PELPSDLGET…PTATPTTSSR (87 aa)) are disordered. Residue serine 58 is modified to Phosphoserine; by MAPKAPK2. A Phosphoserine modification is found at serine 64. The stretch at 69–73 (PPPPG) is one P-P-P-P-G repeat. Residues 75-101 (APLAPRPSSELSPSPTSPTATPTTSSR) show a composition bias toward low complexity. 2 positions are modified to phosphoserine: serine 86 and serine 88. Residue threonine 90 is modified to Phosphothreonine. Phosphoserine is present on serine 91. Residues 93–166 (TATPTTSSRY…GSRCHFIHNP (74 aa)) form a necessary for nuclear localization region. Positions 95-171 (TPTTSSRYKT…FIHNPSEDLA (77 aa)) are necessary for RNA-binding. C3H1-type zinc fingers lie at residues 101–129 (RYKT…HGLG) and 139–167 (KYKT…HNPS). The interval 101 to 192 (RYKTELCRTF…ISFSGLPSGR (92 aa)) is necessary for interaction with PABPN1. The residue at position 167 (serine 167) is a Phosphoserine. The tract at residues 172–325 (APGHPHVLRQ…PIFNRISVSE (154 aa)) is necessary for mRNA decay activation. The residue at position 184 (serine 184) is a Phosphoserine; by MAPKAPK2. Disordered regions lie at residues 185-248 (FSGL…TPAC) and 260-325 (VWGP…SVSE). Serine 195 carries the phosphoserine modification. Residues 196–200 (PPPAS) form a P-P-P-P-G repeat. The span at 204-214 (PSVPSWSFSPS) shows a compositional bias: low complexity. Serine 216 bears the Phosphoserine mark. The P-P-P-P-G repeat unit spans residues 217–222 (PPPPPG). Serine 227 carries the post-translational modification Phosphoserine; by MAPK1; in vitro. Serine 275, serine 295, and serine 322 each carry phosphoserine. Residues 285 to 295 (SSGSSLGGSDS) are compositionally biased toward low complexity. Residues 311–325 (APRRLPIFNRISVSE) form an interaction with CNOT1 region.

Associates with cytoplasmic CCR4-NOT and PAN2-PAN3 deadenylase complexes to trigger ARE-containing mRNA deadenylation and decay processes. Part of a mRNA decay activation complex at least composed of poly(A)-specific exoribonucleases CNOT6, EXOSC2 and XRN1 and mRNA-decapping enzymes DCP1A and DCP2. Associates with the RNA exosome complex. Interacts (via phosphorylated form) with 14-3-3 proteins; these interactions promote exclusion of ZFP36 from cytoplasmic stress granules in response to arsenite treatment in a MAPKAPK2-dependent manner and does not prevent CCR4-NOT deadenylase complex recruitment or ZFP36-induced ARE-containing mRNA deadenylation and decay processes. Interacts with 14-3-3 proteins; these interactions occur in response to rapamycin in an Akt-dependent manner. Interacts with AGO2 and AGO4. Interacts (via C-terminus) with CNOT1; this interaction occurs in a RNA-independent manner and induces mRNA deadenylation. Interacts (via N-terminus) with CNOT6. Interacts with CNOT6L. Interacts (via C-terminus) with CNOT7; this interaction occurs in a RNA-independent manner, induces mRNA deadenylation and is inhibited in a phosphorylation MAPKAPK2-dependent manner. Interacts (via unphosphorylated form) with CNOT8; this interaction occurs in a RNA-independent manner and is inhibited in a phosphorylation MAPKAPK2-dependent manner. Interacts with DCP1A. Interacts (via N-terminus) with DCP2. Interacts with EDC3. Interacts (via N-terminus) with EXOSC2. Interacts with heat shock 70 kDa proteins. Interacts with KHSRP; this interaction increases upon cytokine-induced treatment. Interacts with MAP3K4; this interaction enhances the association with SH3KBP1/CIN85. Interacts with MAPKAPK2; this interaction occurs upon skeletal muscle satellite cell activation. Interacts with NCL. Interacts with NUP214; this interaction increases upon lipopolysaccharide (LPS) stimulation. Interacts with PABPC1; this interaction occurs in a RNA-dependent manner. Interacts (via hypophosphorylated form) with PABPN1 (via RRM domain and C-terminal arginine-rich region); this interaction occurs in the nucleus in a RNA-independent manner, decreases in presence of single-stranded poly(A) RNA-oligomer and in a p38 MAPK-dependent-manner and inhibits nuclear poly(A) tail synthesis. Interacts with PAN2. Interacts (via C3H1-type zinc finger domains) with PKM. Interacts (via C3H1-type zinc finger domains) with nuclear RNA poly(A) polymerase. Interacts with PPP2CA; this interaction occurs in LPS-stimulated cells and induces ZFP36 dephosphorylation, and hence may promote ARE-containing mRNAs decay. Interacts (via C-terminus) with PRR5L (via C-terminus); this interaction may accelerate ZFP36-mediated mRNA decay during stress. Interacts (via C-terminus) with SFN; this interaction occurs in a phosphorylation-dependent manner. Interacts (via extreme C-terminal region) with SH3KBP1/CIN85 (via SH3 domains); this interaction enhances MAP3K4-induced phosphorylation of ZFP36 at Ser-64 and Ser-91 and does not alter neither ZFP36 binding to ARE-containing transcripts nor TNF-alpha mRNA decay. Interacts with XRN1. Interacts (via C-terminus and Ser-184 phosphorylated form) with YWHAB; this interaction occurs in a p38/MAPKAPK2-dependent manner, increases cytoplasmic localization of ZFP36 and protects ZFP36 from Ser-184 dephosphorylation by serine/threonine phosphatase 2A, and hence may be crucial for stabilizing ARE-containing mRNAs. Interacts (via phosphorylated form) with YWHAE. Interacts (via C-terminus) with YWHAG; this interaction occurs in a phosphorylation-dependent manner. Interacts with YWHAH; this interaction occurs in a phosphorylation-dependent manner. Interacts with YWHAQ; this interaction occurs in a phosphorylation-dependent manner. Interacts with (via C-terminus) YWHAZ; this interaction occurs in a phosphorylation-dependent manner. Does not interact with SH3KBP1. Interacts (via P-P-P-P-G repeats) with GIGYF2; the interaction is direct. In terms of processing, phosphorylated. Phosphorylation at serine and/or threonine residues occurs in a p38 MAPK- and MAPKAPK2-dependent manner. Phosphorylated by MAPKAPK2 at Ser-58 and Ser-184; phosphorylation increases its stability and cytoplasmic localization, promotes binding to 14-3-3 adapter proteins and inhibits the recruitment of cytoplasmic CCR4-NOT and PAN2-PAN3 deadenylase complexes to the mRNA decay machinery, thereby inhibiting ZFP36-induced ARE-containing mRNA deadenylation and decay processes. Phosphorylation by MAPKAPK2 does not impair ARE-containing RNA-binding. Phosphorylated in a MAPKAPK2- and p38 MAPK-dependent manner upon skeletal muscle satellite cell activation; this phosphorylation inhibits ZFP36-mediated mRNA decay activity, and hence stabilizes MYOD1 mRNA. Phosphorylated by MAPK1 upon mitogen stimulation. Phosphorylated at Ser-64 and Ser-91; these phosphorylations increase in a SH3KBP1-dependent manner. Phosphorylated at serine and threonine residues in a pyruvate kinase PKM- and p38 MAPK-dependent manner. Phosphorylation at Ser-58 may participate in the PKM-mediated degradation of ZFP36 in a p38 MAPK-dependent manner. Dephosphorylated by serine/threonine phosphatase 2A at Ser-184. Post-translationally, ubiquitinated; pyruvate kinase (PKM)-dependent ubiquitination leads to proteasomal degradation through a p38 MAPK signaling pathway.

It is found in the nucleus. Its subcellular location is the cytoplasm. The protein localises to the cytoplasmic granule. It localises to the P-body. Functionally, zinc-finger RNA-binding protein that destabilizes numerous cytoplasmic AU-rich element (ARE)-containing mRNA transcripts by promoting their poly(A) tail removal or deadenylation, and hence provide a mechanism for attenuating protein synthesis. Acts as an 3'-untranslated region (UTR) ARE mRNA-binding adapter protein to communicate signaling events to the mRNA decay machinery. Recruits deadenylase CNOT7 (and probably the CCR4-NOT complex) via association with CNOT1, and hence promotes ARE-mediated mRNA deadenylation. Also functions by recruiting components of the cytoplasmic RNA decay machinery to the bound ARE-containing mRNAs. Self regulates by destabilizing its own mRNA. Binds to 3'-UTR ARE of numerous mRNAs. Also binds to ARE of its own mRNA. Plays a role in anti-inflammatory responses; suppresses tumor necrosis factor (TNF)-alpha production by stimulating ARE-mediated TNF-alpha mRNA decay and several other inflammatory ARE-containing mRNAs in interferon (IFN)- and/or lipopolysaccharide (LPS)-induced macrophages. Also plays a role in the regulation of dendritic cell maturation at the post-transcriptional level, and hence operates as part of a negative feedback loop to limit the inflammatory response. Promotes ARE-mediated mRNA decay of hypoxia-inducible factor HIF1A mRNA during the response of endothelial cells to hypoxia. Positively regulates early adipogenesis of preadipocytes by promoting ARE-mediated mRNA decay of immediate early genes (IEGs). Negatively regulates hematopoietic/erythroid cell differentiation by promoting ARE-mediated mRNA decay of the transcription factor STAT5B mRNA. Plays a role in maintaining skeletal muscle satellite cell quiescence by promoting ARE-mediated mRNA decay of the myogenic determination factor MYOD1 mRNA. Also associates with and regulates the expression of non-ARE-containing target mRNAs at the post-transcriptional level, such as MHC class I mRNAs. Participates in association with argonaute RISC catalytic components in the ARE-mediated mRNA decay mechanism; assists microRNA (miRNA) targeting ARE-containing mRNAs. May also play a role in the regulation of cytoplasmic mRNA decapping; enhances decapping of ARE-containing RNAs, in vitro. Involved in the delivery of target ARE-mRNAs to processing bodies (PBs). In addition to its cytosolic mRNA-decay function, affects nuclear pre-mRNA processing. Negatively regulates nuclear poly(A)-binding protein PABPN1-stimulated polyadenylation activity on ARE-containing pre-mRNA during LPS-stimulated macrophages. Also involved in the regulation of stress granule (SG) and P-body (PB) formation and fusion. Plays a role in the regulation of keratinocyte proliferation, differentiation and apoptosis. Plays a role as a tumor suppressor by inhibiting cell proliferation in breast cancer cells. The sequence is that of mRNA decay activator protein ZFP36 from Ovis aries (Sheep).